We begin with the raw amino-acid sequence, 126 residues long: Glycine cleavage system H protein (126 aa).

Residues K22–E103 form the Lipoyl-binding domain. K63 bears the N6-lipoyllysine mark.

It belongs to the GcvH family. The glycine cleavage system is composed of four proteins: P, T, L and H. (R)-lipoate serves as cofactor.

In terms of biological role, the glycine cleavage system catalyzes the degradation of glycine. The H protein shuttles the methylamine group of glycine from the P protein to the T protein. This chain is Glycine cleavage system H protein, found in Thermoanaerobacter pseudethanolicus (strain ATCC 33223 / 39E) (Clostridium thermohydrosulfuricum).